The primary structure comprises 93 residues: UPF0369 protein RC0209 (93 aa).

The disordered stretch occupies residues 1–24; it reads MDDKKDNRHLSKPAYREECTGDTE. The RPE1 insert domain occupies 8–55; sequence RHLSKPAYREECTGDTERSTTAYMDILEDVSTGSTSKLPLEAKFVKIS.

It belongs to the SDHAF4 family.

In Rickettsia conorii (strain ATCC VR-613 / Malish 7), this protein is UPF0369 protein RC0209.